Consider the following 462-residue polypeptide: Chromosomal replication initiator protein DnaA (462 aa).

Residues 1-83 (MSLSLWQQCL…LRFEVGSKPA (83 aa)) form a domain I, interacts with DnaA modulators region. Residues 83 to 125 (AARAHNNPVTASVSAPVAPVTRSAPMRPSWDNSPAQPELSYRS) form a domain II region. A disordered region spans residues 104–125 (RSAPMRPSWDNSPAQPELSYRS). Residues 112-125 (WDNSPAQPELSYRS) show a composition bias toward polar residues. Residues 126–342 (NVNPKHTFDN…GALNRVIANA (217 aa)) are domain III, AAA+ region. ATP-binding residues include Gly170, Gly172, Lys173, and Thr174. Residues 343–462 (NFTGRAITID…FSNLIRTLSS (120 aa)) form a domain IV, binds dsDNA region.

It belongs to the DnaA family. Oligomerizes as a right-handed, spiral filament on DNA at oriC.

It localises to the cytoplasm. In terms of biological role, plays an essential role in the initiation and regulation of chromosomal replication. ATP-DnaA binds to the origin of replication (oriC) to initiate formation of the DNA replication initiation complex once per cell cycle. Binds the DnaA box (a 9 base pair repeat at the origin) and separates the double-stranded (ds)DNA. Forms a right-handed helical filament on oriC DNA; dsDNA binds to the exterior of the filament while single-stranded (ss)DNA is stabiized in the filament's interior. The ATP-DnaA-oriC complex binds and stabilizes one strand of the AT-rich DNA unwinding element (DUE), permitting loading of DNA polymerase. After initiation quickly degrades to an ADP-DnaA complex that is not apt for DNA replication. Binds acidic phospholipids. This is Chromosomal replication initiator protein DnaA from Yersinia pseudotuberculosis serotype O:1b (strain IP 31758).